Reading from the N-terminus, the 269-residue chain is Holocytochrome-c synthase (269 aa).

A disordered region spans residues 1 to 72 (MGWFWADQKT…ASKQPGQKMD (72 aa)). HRM repeat units lie at residues 25-30 (GCPVMH) and 41-46 (ECPVMQ).

This sequence belongs to the cytochrome c-type heme lyase family.

It localises to the mitochondrion inner membrane. Its subcellular location is the mitochondrion intermembrane space. The enzyme catalyses holo-[cytochrome c] = apo-[cytochrome c] + heme b. In terms of biological role, lyase that catalyzes the covalent linking of the heme group to the cytochrome C apoprotein to produce the mature functional cytochrome. This Saccharomyces cerevisiae (strain ATCC 204508 / S288c) (Baker's yeast) protein is Holocytochrome-c synthase (CYC3).